Reading from the N-terminus, the 278-residue chain is MRFSIVLSSIAALSSVAAAERVCGAIPHRTFAKESKAAIEAATAAGLTTKANITVETYFHVITAGSKGEINNYGPAGIGFKLMDVSRTDNAKWASGGDETGMKKSLRKGGYSALNVYFAPNLEGGLLGFCYFPKANPSANDKLVDGCVILSGSVPGGEAAPYNEGKTTTHEVGHYMGLYHVFNEEQGNCQKDGDMVADTPVQGTKTSGCPQGKDSCPGQGVDSIHNYMDYSDEYVLLSPVYDSWHQTNHRHFSPCMNQFTPGQISRMQMMWQQFRAGK.

Positions 1–19 are cleaved as a signal peptide; the sequence is MRFSIVLSSIAALSSVAAA. An N-linked (GlcNAc...) asparagine glycan is attached at asparagine 52. Histidine 170 provides a ligand contact to Zn(2+). The active site involves glutamate 171. A Zn(2+)-binding site is contributed by histidine 174. An intrachain disulfide couples cysteine 209 to cysteine 255.

The protein belongs to the peptidase M43B family.

The protein resides in the secreted. Secreted metalloproteinase that allows assimilation of proteinaceous substrates. Plays a pivotal role as a pathogenicity determinant during infections and contributes to the ability of the pathogen to persist within the mammalian host. This chain is Extracellular metalloprotease MCYG_03238, found in Arthroderma otae (strain ATCC MYA-4605 / CBS 113480) (Microsporum canis).